The following is a 355-amino-acid chain: Small ribosomal subunit biogenesis GTPase RsgA 1 (355 aa).

The CP-type G domain occupies 103-262 (GRVADRQAIA…LIDTPGVREF (160 aa)). Residues 152 to 155 (NKAD) and 204 to 212 (GSSGVGKSS) each bind GTP. Zn(2+) is bound by residues Cys285, Cys290, His292, and Cys298.

This sequence belongs to the TRAFAC class YlqF/YawG GTPase family. RsgA subfamily. As to quaternary structure, monomer. Associates with 30S ribosomal subunit, binds 16S rRNA. It depends on Zn(2+) as a cofactor.

The protein localises to the cytoplasm. Its function is as follows. One of several proteins that assist in the late maturation steps of the functional core of the 30S ribosomal subunit. Helps release RbfA from mature subunits. May play a role in the assembly of ribosomal proteins into the subunit. Circularly permuted GTPase that catalyzes slow GTP hydrolysis, GTPase activity is stimulated by the 30S ribosomal subunit. The polypeptide is Small ribosomal subunit biogenesis GTPase RsgA 1 (Bacteroides thetaiotaomicron (strain ATCC 29148 / DSM 2079 / JCM 5827 / CCUG 10774 / NCTC 10582 / VPI-5482 / E50)).